The sequence spans 858 residues: Receptor-like protein kinase ANXUR2 (858 aa).

Positions M1 to G27 are cleaved as a signal peptide. The Extracellular portion of the chain corresponds to Q28 to R431. N-linked (GlcNAc...) asparagine glycosylation is found at N133, N293, N303, and N331. The helical transmembrane segment at I432–C452 threads the bilayer. The Cytoplasmic portion of the chain corresponds to F453–R858. The 274-residue stretch at F521–A794 folds into the Protein kinase domain. ATP contacts are provided by residues I527–V535 and K549. D645 serves as the catalytic Proton acceptor. The disordered stretch occupies residues T800–R858. Residues N811–V825 are compositionally biased toward gly residues. Residues E843–R858 show a composition bias toward polar residues.

The protein belongs to the protein kinase superfamily. Ser/Thr protein kinase family. In terms of tissue distribution, expressed in pollen, but not in pistils or seedlings.

It localises to the cell membrane. It catalyses the reaction L-seryl-[protein] + ATP = O-phospho-L-seryl-[protein] + ADP + H(+). It carries out the reaction L-threonyl-[protein] + ATP = O-phospho-L-threonyl-[protein] + ADP + H(+). Functionally, receptor-like protein kinase that controls pollen tube behavior by directing rupture at proper timing to release the sperm cell. This Arabidopsis thaliana (Mouse-ear cress) protein is Receptor-like protein kinase ANXUR2 (ANX2).